A 170-amino-acid polypeptide reads, in one-letter code: Peptide deformylase (170 aa).

Fe cation contacts are provided by cysteine 91 and histidine 133. The active site involves glutamate 134. Histidine 137 is a Fe cation binding site.

This sequence belongs to the polypeptide deformylase family. Fe(2+) serves as cofactor.

It carries out the reaction N-terminal N-formyl-L-methionyl-[peptide] + H2O = N-terminal L-methionyl-[peptide] + formate. Removes the formyl group from the N-terminal Met of newly synthesized proteins. Requires at least a dipeptide for an efficient rate of reaction. N-terminal L-methionine is a prerequisite for activity but the enzyme has broad specificity at other positions. This Yersinia pseudotuberculosis serotype O:1b (strain IP 31758) protein is Peptide deformylase.